A 273-amino-acid chain; its full sequence is DNA repair protein RecO (273 aa).

Positions 250 to 273 (NVGQNPSGKDDLNERRDVDGTGES) are disordered. Positions 257 to 273 (GKDDLNERRDVDGTGES) are enriched in basic and acidic residues.

This sequence belongs to the RecO family.

Its function is as follows. Involved in DNA repair and RecF pathway recombination. In Desulfitobacterium hafniense (strain Y51), this protein is DNA repair protein RecO.